Reading from the N-terminus, the 441-residue chain is Ribosomal protein uS12 methylthiotransferase RimO (441 aa).

Residues 8–118 (PKIGFVSLGC…VLQHVHHYVP (111 aa)) form the MTTase N-terminal domain. [4Fe-4S] cluster-binding residues include Cys-17, Cys-53, Cys-82, Cys-150, Cys-154, and Cys-157. One can recognise a Radical SAM core domain in the interval 136-373 (LTPRHYAYLK…MQLQQQISAE (238 aa)). The 66-residue stretch at 376–441 (QEKVGREILV…DEYDLWGSRV (66 aa)) folds into the TRAM domain.

It belongs to the methylthiotransferase family. RimO subfamily. Requires [4Fe-4S] cluster as cofactor.

It is found in the cytoplasm. The catalysed reaction is L-aspartate(89)-[ribosomal protein uS12]-hydrogen + (sulfur carrier)-SH + AH2 + 2 S-adenosyl-L-methionine = 3-methylsulfanyl-L-aspartate(89)-[ribosomal protein uS12]-hydrogen + (sulfur carrier)-H + 5'-deoxyadenosine + L-methionine + A + S-adenosyl-L-homocysteine + 2 H(+). Functionally, catalyzes the methylthiolation of an aspartic acid residue of ribosomal protein uS12. This chain is Ribosomal protein uS12 methylthiotransferase RimO, found in Salmonella arizonae (strain ATCC BAA-731 / CDC346-86 / RSK2980).